Reading from the N-terminus, the 475-residue chain is Ribulose bisphosphate carboxylase large chain (475 aa).

A propeptide spanning residues 1–2 (MS) is cleaved from the precursor. N-acetylproline is present on P3. At K14 the chain carries N6,N6,N6-trimethyllysine. Residues N123 and T173 each coordinate substrate. The Proton acceptor role is filled by K175. Substrate is bound at residue K177. Mg(2+) is bound by residues K201, D203, and E204. Position 201 is an N6-carboxylysine (K201). The active-site Proton acceptor is H294. Positions 295, 327, and 379 each coordinate substrate.

It belongs to the RuBisCO large chain family. Type I subfamily. Heterohexadecamer of 8 large chains and 8 small chains; disulfide-linked. The disulfide link is formed within the large subunit homodimers. Mg(2+) is required as a cofactor. Post-translationally, the disulfide bond which can form in the large chain dimeric partners within the hexadecamer appears to be associated with oxidative stress and protein turnover.

The protein localises to the plastid. It is found in the chloroplast. The catalysed reaction is 2 (2R)-3-phosphoglycerate + 2 H(+) = D-ribulose 1,5-bisphosphate + CO2 + H2O. It carries out the reaction D-ribulose 1,5-bisphosphate + O2 = 2-phosphoglycolate + (2R)-3-phosphoglycerate + 2 H(+). In terms of biological role, ruBisCO catalyzes two reactions: the carboxylation of D-ribulose 1,5-bisphosphate, the primary event in carbon dioxide fixation, as well as the oxidative fragmentation of the pentose substrate in the photorespiration process. Both reactions occur simultaneously and in competition at the same active site. The chain is Ribulose bisphosphate carboxylase large chain from Picea abies (Norway spruce).